A 159-amino-acid chain; its full sequence is Small ribosomal subunit protein uS4 (159 aa).

Residues 106–158 (RRLQTIVYRMGLAKSIYHARQLIVHGHIAVAGRRVSSPGFLVPRELEDKISLI) enclose the S4 RNA-binding domain.

This sequence belongs to the universal ribosomal protein uS4 family. As to quaternary structure, part of the 30S ribosomal subunit. Contacts protein S5. The interaction surface between S4 and S5 is involved in control of translational fidelity.

In terms of biological role, one of the primary rRNA binding proteins, it binds directly to 16S rRNA where it nucleates assembly of the body of the 30S subunit. With S5 and S12 plays an important role in translational accuracy. The sequence is that of Small ribosomal subunit protein uS4 from Pyrobaculum neutrophilum (strain DSM 2338 / JCM 9278 / NBRC 100436 / V24Sta) (Thermoproteus neutrophilus).